We begin with the raw amino-acid sequence, 329 residues long: Acetyl-coenzyme A carboxylase carboxyl transferase subunit alpha (329 aa).

In terms of domain architecture, CoA carboxyltransferase C-terminal spans 40 to 294; sequence QLESLAARRR…RAALERHLGE (255 aa).

It belongs to the AccA family. In terms of assembly, acetyl-CoA carboxylase is a heterohexamer composed of biotin carboxyl carrier protein (AccB), biotin carboxylase (AccC) and two subunits each of ACCase subunit alpha (AccA) and ACCase subunit beta (AccD).

The protein localises to the cytoplasm. It carries out the reaction N(6)-carboxybiotinyl-L-lysyl-[protein] + acetyl-CoA = N(6)-biotinyl-L-lysyl-[protein] + malonyl-CoA. It participates in lipid metabolism; malonyl-CoA biosynthesis; malonyl-CoA from acetyl-CoA: step 1/1. In terms of biological role, component of the acetyl coenzyme A carboxylase (ACC) complex. First, biotin carboxylase catalyzes the carboxylation of biotin on its carrier protein (BCCP) and then the CO(2) group is transferred by the carboxyltransferase to acetyl-CoA to form malonyl-CoA. The protein is Acetyl-coenzyme A carboxylase carboxyl transferase subunit alpha of Parasynechococcus marenigrum (strain WH8102).